The primary structure comprises 475 residues: Ribulose bisphosphate carboxylase large chain (475 aa).

Residues 1 to 2 (MS) constitute a propeptide that is removed on maturation. N-acetylproline is present on proline 3. An N6,N6,N6-trimethyllysine modification is found at lysine 14. Substrate is bound by residues asparagine 123 and threonine 173. Residue lysine 175 is the Proton acceptor of the active site. Lysine 177 is a substrate binding site. Mg(2+) contacts are provided by lysine 201, aspartate 203, and glutamate 204. An N6-carboxylysine modification is found at lysine 201. The active-site Proton acceptor is the histidine 294. Substrate-binding residues include arginine 295, histidine 327, and serine 379.

The protein belongs to the RuBisCO large chain family. Type I subfamily. As to quaternary structure, heterohexadecamer of 8 large chains and 8 small chains; disulfide-linked. The disulfide link is formed within the large subunit homodimers. It depends on Mg(2+) as a cofactor. Post-translationally, the disulfide bond which can form in the large chain dimeric partners within the hexadecamer appears to be associated with oxidative stress and protein turnover.

It localises to the plastid. It is found in the chloroplast. It carries out the reaction 2 (2R)-3-phosphoglycerate + 2 H(+) = D-ribulose 1,5-bisphosphate + CO2 + H2O. The enzyme catalyses D-ribulose 1,5-bisphosphate + O2 = 2-phosphoglycolate + (2R)-3-phosphoglycerate + 2 H(+). Functionally, ruBisCO catalyzes two reactions: the carboxylation of D-ribulose 1,5-bisphosphate, the primary event in carbon dioxide fixation, as well as the oxidative fragmentation of the pentose substrate in the photorespiration process. Both reactions occur simultaneously and in competition at the same active site. The protein is Ribulose bisphosphate carboxylase large chain of Mesostigma viride (Green alga).